The primary structure comprises 522 residues: GMP synthase [glutamine-hydrolyzing] (522 aa).

The region spanning 9–204 (KILILDFGAQ…VVDICGCQTL (196 aa)) is the Glutamine amidotransferase type-1 domain. The active-site Nucleophile is the Cys-86. Residues His-178 and Glu-180 contribute to the active site. In terms of domain architecture, GMPS ATP-PPase spans 205 to 397 (WTSANIIEDQ…LGLPHAMVYR (193 aa)). ATP is bound at residue 232 to 238 (SGGVDSS).

Homodimer.

It carries out the reaction XMP + L-glutamine + ATP + H2O = GMP + L-glutamate + AMP + diphosphate + 2 H(+). It functions in the pathway purine metabolism; GMP biosynthesis; GMP from XMP (L-Gln route): step 1/1. Its function is as follows. Catalyzes the synthesis of GMP from XMP. This is GMP synthase [glutamine-hydrolyzing] from Xylella fastidiosa (strain M23).